Reading from the N-terminus, the 287-residue chain is 3-methyl-2-oxobutanoate hydroxymethyltransferase (287 aa).

Mg(2+) contacts are provided by D57 and D96. 3-methyl-2-oxobutanoate contacts are provided by residues 57-58 (DS), D96, and K125. E127 lines the Mg(2+) pocket. E194 acts as the Proton acceptor in catalysis.

This sequence belongs to the PanB family. Homodecamer; pentamer of dimers. Mg(2+) is required as a cofactor.

The protein resides in the cytoplasm. It carries out the reaction 3-methyl-2-oxobutanoate + (6R)-5,10-methylene-5,6,7,8-tetrahydrofolate + H2O = 2-dehydropantoate + (6S)-5,6,7,8-tetrahydrofolate. It functions in the pathway cofactor biosynthesis; (R)-pantothenate biosynthesis; (R)-pantoate from 3-methyl-2-oxobutanoate: step 1/2. Its function is as follows. Catalyzes the reversible reaction in which hydroxymethyl group from 5,10-methylenetetrahydrofolate is transferred onto alpha-ketoisovalerate to form ketopantoate. This is 3-methyl-2-oxobutanoate hydroxymethyltransferase from Methylobacterium sp. (strain 4-46).